A 249-amino-acid chain; its full sequence is Protein LicA homolog (249 aa).

Belongs to the peptidase S49 family.

The protein is Protein LicA homolog (licA) of Metamycoplasma hominis (strain ATCC 23114 / DSM 25592 / NBRC 14850 / NCTC 10111 / PG21) (Mycoplasma hominis).